We begin with the raw amino-acid sequence, 245 residues long: Small ribosomal subunit protein uS3 (245 aa).

The KH type-2 domain occupies 38-106 (IRKYLNTRLA…EVQINIFEIK (69 aa)). A disordered region spans residues 225–245 (YEGSGDKSVKRRKRNGIKKNE). Basic residues predominate over residues 233 to 245 (VKRRKRNGIKKNE).

It belongs to the universal ribosomal protein uS3 family. Part of the 30S ribosomal subunit. Forms a tight complex with proteins S10 and S14.

In terms of biological role, binds the lower part of the 30S subunit head. Binds mRNA in the 70S ribosome, positioning it for translation. The protein is Small ribosomal subunit protein uS3 of Azobacteroides pseudotrichonymphae genomovar. CFP2.